The chain runs to 55 residues: Small ribosomal subunit protein bS21 (55 aa).

It belongs to the bacterial ribosomal protein bS21 family.

The sequence is that of Small ribosomal subunit protein bS21 from Ureaplasma parvum serovar 3 (strain ATCC 27815 / 27 / NCTC 11736).